The following is a 259-amino-acid chain: Small ribosomal subunit protein uS2 (259 aa).

Residues 224–259 are disordered; that stretch reads GKQGEDDQQVAPAEDVAEEVSDESLQDLKNSVEGND. The segment covering 238–248 has biased composition (acidic residues); the sequence is DVAEEVSDESL. Positions 250–259 are enriched in polar residues; that stretch reads DLKNSVEGND.

Belongs to the universal ribosomal protein uS2 family.

In Limosilactobacillus fermentum (strain NBRC 3956 / LMG 18251) (Lactobacillus fermentum), this protein is Small ribosomal subunit protein uS2.